The sequence spans 257 residues: MKKIATATIATAGIATFAFAHHDAQAAEQNNDGYNPNDPYSYSYTYTIDAEGNYHYTWKGNWSPDRVNTSYNYNNYNNYNYYGYNNYSNYNNYSNYNNYNNYQSNNTQSQRTTQPTGGLGASYSTSSSNVHVTTTSAPSSNGVSLSNARSASGNLYTSGQCTYYVFDRVGGKIGSTWGNANNWANAAARSGYTVNNSPAKGAILQTSQGAYGHVAYVEGVNSNGSIRVSEMNYGHGAGVVTSRTISASQAASYNYIH.

Positions 1–26 are cleaved as a signal peptide; that stretch reads MKKIATATIATAGIATFAFAHHDAQA. 8 tandem repeats follow at residues 73-75, 76-78, 84-86, 87-89, 90-92, 93-95, 96-98, and 99-101. The 8 X 3 AA repeats of Y-[NS]-N stretch occupies residues 73 to 101; that stretch reads YNNYNNYNYYGYNNYSNYNNYSNYNNYNN. Residues 101–144 form a disordered region; the sequence is NYQSNNTQSQRTTQPTGGLGASYSTSSSNVHVTTTSAPSSNGVS. Polar residues predominate over residues 107 to 116; that stretch reads TQSQRTTQPT. Low complexity predominate over residues 122–136; sequence SYSTSSSNVHVTTTS. Residues 136 to 257 enclose the Peptidase C51 domain; the sequence is SAPSSNGVSL…SQAASYNYIH (122 aa).

The protein localises to the secreted. In terms of biological role, not known; immunogenic protein expressed during sepsis and particularly during episodes of infective endocarditis. This chain is Staphylococcal secretory antigen SsaA (ssaA), found in Staphylococcus epidermidis.